Consider the following 326-residue polypeptide: Sulfate/thiosulfate import ATP-binding protein CysA (326 aa).

The 235-residue stretch at 3–237 folds into the ABC transporter domain; the sequence is IEVRNVSKNF…PSNDFVYHFL (235 aa). ATP is bound at residue 35–42; sequence GPSGCGKT.

This sequence belongs to the ABC transporter superfamily. Sulfate/tungstate importer (TC 3.A.1.6) family. In terms of assembly, the complex is composed of two ATP-binding proteins (CysA), two transmembrane proteins (CysT and CysW) and a solute-binding protein (CysP).

It is found in the cell inner membrane. The enzyme catalyses sulfate(out) + ATP + H2O = sulfate(in) + ADP + phosphate + H(+). The catalysed reaction is thiosulfate(out) + ATP + H2O = thiosulfate(in) + ADP + phosphate + H(+). Its function is as follows. Part of the ABC transporter complex CysAWTP involved in sulfate/thiosulfate import. Responsible for energy coupling to the transport system. This chain is Sulfate/thiosulfate import ATP-binding protein CysA, found in Pseudomonas syringae pv. tomato (strain ATCC BAA-871 / DC3000).